Here is a 150-residue protein sequence, read N- to C-terminus: MRTYDLSPFWRSTIGFDRLLNLVNDTVDNGDTYPPYDIERTSEDQYRISLALVGFTPDDVAITAERSTLTVEGRKTDEDERDYLYRGISVRPFRRVFNLADYVQVKDATFEDGLLKIALTREMPEALKPRQIAIDVAGNDHQRSDRTQAA.

Residues 27–137 form the sHSP domain; it reads VDNGDTYPPY…KPRQIAIDVA (111 aa).

Belongs to the small heat shock protein (HSP20) family.

The polypeptide is Small heat shock protein HspE (hspE) (Bradyrhizobium diazoefficiens (strain JCM 10833 / BCRC 13528 / IAM 13628 / NBRC 14792 / USDA 110)).